A 445-amino-acid polypeptide reads, in one-letter code: Histidinol dehydrogenase (445 aa).

Residues Tyr-136, Gln-200, and Asn-228 each coordinate NAD(+). 3 residues coordinate substrate: Thr-251, Gln-273, and His-276. Gln-273 and His-276 together coordinate Zn(2+). Active-site proton acceptor residues include Glu-342 and His-343. Substrate-binding residues include His-343, Asp-376, Glu-430, and His-435. Asp-376 serves as a coordination point for Zn(2+). Residue His-435 coordinates Zn(2+).

Belongs to the histidinol dehydrogenase family. Zn(2+) is required as a cofactor.

It carries out the reaction L-histidinol + 2 NAD(+) + H2O = L-histidine + 2 NADH + 3 H(+). It functions in the pathway amino-acid biosynthesis; L-histidine biosynthesis; L-histidine from 5-phospho-alpha-D-ribose 1-diphosphate: step 9/9. In terms of biological role, catalyzes the sequential NAD-dependent oxidations of L-histidinol to L-histidinaldehyde and then to L-histidine. This is Histidinol dehydrogenase (hisD) from Mycolicibacterium smegmatis (Mycobacterium smegmatis).